Consider the following 61-residue polypeptide: MAKDFVTGKKTTFGNTRSHALNSSSRSWKPNLQKVRILVNGKPKRVWVSTKTLKSGKVTRV.

Residues 1–27 are disordered; the sequence is MAKDFVTGKKTTFGNTRSHALNSSSRS. Positions 9 to 27 are enriched in polar residues; the sequence is KKTTFGNTRSHALNSSSRS.

This sequence belongs to the bacterial ribosomal protein bL28 family.

The polypeptide is Large ribosomal subunit protein bL28 (Lactobacillus delbrueckii subsp. bulgaricus (strain ATCC 11842 / DSM 20081 / BCRC 10696 / JCM 1002 / NBRC 13953 / NCIMB 11778 / NCTC 12712 / WDCM 00102 / Lb 14)).